Consider the following 252-residue polypeptide: Probable transcriptional regulatory protein THA_1246 (252 aa).

Belongs to the TACO1 family.

Its subcellular location is the cytoplasm. In Thermosipho africanus (strain TCF52B), this protein is Probable transcriptional regulatory protein THA_1246.